The sequence spans 237 residues: Eukaryotic translation initiation factor 4E-1 (237 aa).

A disordered region spans residues 1–61 (MVVEDTQKSV…KPPAALARNP (61 aa)). The span at 25 to 44 (NNDDDDDDLEEGEIPVDGED) shows a compositional bias: acidic residues. The span at 47 to 58 (ATATTKPPAALA) shows a compositional bias: low complexity. EIF4G-binding stretches follow at residues 62–65 (HPLE) and 72–108 (FDNP…NNIH). Residues 80–85 (KQAAWG), Lys-112, and 130–131 (WE) contribute to the mRNA site. A disulfide bridge connects residues Cys-135 and Cys-173. The interval 156–165 (YTLLAMIGEQ) is EIF4G-binding. Residues 180-185 (RSRQDK) and 225-229 (KKLDR) contribute to the mRNA site.

This sequence belongs to the eukaryotic initiation factor 4E family. EIF4F is a multi-subunit complex, the composition of which varies with external and internal environmental conditions. It is composed of at least EIF4A, EIF4E and EIF4G. EIF4E is also known to interact with other partners. In higher plants two isoforms of EIF4F have been identified, named isoform EIF4F and isoform EIF(iso)4F. Isoform EIF4F has subunits p220 and p26, whereas isoform EIF(iso)4F has subunits p82 and p28. As to quaternary structure, (Microbial infection) Interacts with potyvirus viral genome-linked protein (VPg) in the nucleus; this interaction is possible in susceptible hosts but is impaired in resistant plants. Binds to soybean mosaic virus (SMV) VPg in the nucleus. Interacts with SMV nuclear inclusion protein A (NIa-Pro) and nuclear inclusion protein B (NIb) in the cytoplasm. In terms of processing, according to the redox status, the Cys-135-Cys-173 disulfide bridge may have a role in regulating protein function by affecting its ability to bind capped mRNA. As to expression, mostly expressed in roots, flowers, immature pods and mature seeds, and, to a lower extent, in stems and leaves.

The protein localises to the nucleus. It localises to the cytoplasm. Its function is as follows. Component of the protein complex eIF4F, which is involved in the recognition of the mRNA cap, ATP-dependent unwinding of 5'-terminal secondary structure and recruitment of mRNA to the ribosome. Recognizes and binds the 7-methylguanosine-containing mRNA cap during an early step in the initiation of protein synthesis and facilitates ribosome binding by inducing the unwinding of the mRNAs secondary structures. Key component of recessive resistance to potyviruses (e.g. soybean mosaic virus (SMV), bean common mosaic virus (BCMV) and watermelon mosaic virus (WMV), but not bean pod mottle virus (BPMV)). (Microbial infection) Susceptibility host factor required for viral infection by recruiting viral RNAs to the host ribosomal complex via an interaction with viral genome-linked protein (VPg). This is Eukaryotic translation initiation factor 4E-1 from Glycine max (Soybean).